Here is a 239-residue protein sequence, read N- to C-terminus: Small ribosomal subunit protein uS2 (239 aa).

This sequence belongs to the universal ribosomal protein uS2 family.

The sequence is that of Small ribosomal subunit protein uS2 from Francisella tularensis subsp. tularensis (strain WY96-3418).